We begin with the raw amino-acid sequence, 418 residues long: Glutamyl-tRNA reductase (418 aa).

Substrate contacts are provided by residues 49 to 52 (TCNR), Ser109, 114 to 116 (EPQ), and Gln120. Cys50 functions as the Nucleophile in the catalytic mechanism. 189-194 (GAGETI) contributes to the NADP(+) binding site.

This sequence belongs to the glutamyl-tRNA reductase family. Homodimer.

It carries out the reaction (S)-4-amino-5-oxopentanoate + tRNA(Glu) + NADP(+) = L-glutamyl-tRNA(Glu) + NADPH + H(+). It participates in porphyrin-containing compound metabolism; protoporphyrin-IX biosynthesis; 5-aminolevulinate from L-glutamyl-tRNA(Glu): step 1/2. Its function is as follows. Catalyzes the NADPH-dependent reduction of glutamyl-tRNA(Glu) to glutamate 1-semialdehyde (GSA). This chain is Glutamyl-tRNA reductase, found in Escherichia coli O127:H6 (strain E2348/69 / EPEC).